A 232-amino-acid chain; its full sequence is Phosphatidylserine decarboxylase proenzyme (232 aa).

Residue Ser-190 is the Schiff-base intermediate with substrate; via pyruvic acid of the active site. A Pyruvic acid (Ser); by autocatalysis modification is found at Ser-190.

It belongs to the phosphatidylserine decarboxylase family. PSD-A subfamily. In terms of assembly, heterodimer of a large membrane-associated beta subunit and a small pyruvoyl-containing alpha subunit. Pyruvate serves as cofactor. Post-translationally, is synthesized initially as an inactive proenzyme. Formation of the active enzyme involves a self-maturation process in which the active site pyruvoyl group is generated from an internal serine residue via an autocatalytic post-translational modification. Two non-identical subunits are generated from the proenzyme in this reaction, and the pyruvate is formed at the N-terminus of the alpha chain, which is derived from the carboxyl end of the proenzyme. The post-translation cleavage follows an unusual pathway, termed non-hydrolytic serinolysis, in which the side chain hydroxyl group of the serine supplies its oxygen atom to form the C-terminus of the beta chain, while the remainder of the serine residue undergoes an oxidative deamination to produce ammonia and the pyruvoyl prosthetic group on the alpha chain.

It localises to the cell membrane. It catalyses the reaction a 1,2-diacyl-sn-glycero-3-phospho-L-serine + H(+) = a 1,2-diacyl-sn-glycero-3-phosphoethanolamine + CO2. It participates in phospholipid metabolism; phosphatidylethanolamine biosynthesis; phosphatidylethanolamine from CDP-diacylglycerol: step 2/2. Functionally, catalyzes the formation of phosphatidylethanolamine (PtdEtn) from phosphatidylserine (PtdSer). This chain is Phosphatidylserine decarboxylase proenzyme, found in Rhodopseudomonas palustris (strain BisA53).